The chain runs to 139 residues: Invertebrate-type lysozyme 3 (139 aa).

The N-terminal stretch at 1-18 (MFVKSLVFLTIAVAYASA) is a signal peptide. In terms of domain architecture, I-type lysozyme spans 19-138 (DCLHCICMRE…WNGIKSCCGC (120 aa)). Cystine bridges form between Cys20/Cys106, Cys23/Cys138, Cys25/Cys31, Cys36/Cys45, Cys58/Cys86, Cys76/Cys82, and Cys98/Cys120. Glu28 functions as the Proton donor in the catalytic mechanism. The active-site Nucleophile is the Asp39. Position 51 to 57 (51 to 57 (KLPYYED)) interacts with substrate. Substrate is bound by residues Tyr90 and 113-115 (HNG).

This sequence belongs to the glycosyl hydrolase 22 family. Type-I lysozyme subfamily. In terms of tissue distribution, expressed in pharynx grinder muscle pm7, isthmus marginal cell mc2 and pharyngeal muscle cell pm5, intestinal cells and at lower levels in coelomocytes and epidermis. Expressed at low levels in intestine.

It is found in the late endosome lumen. It localises to the recycling endosome lumen. Its subcellular location is the lysosome lumen. The protein localises to the secreted. The catalysed reaction is Hydrolysis of (1-&gt;4)-beta-linkages between N-acetylmuramic acid and N-acetyl-D-glucosamine residues in a peptidoglycan and between N-acetyl-D-glucosamine residues in chitodextrins.. Functionally, has bacteriolytic activity against Gram-positive bacteria. Plays a role in defense against bacterial pathogens. Involved in pharyngeal grinder function by enabling proper lysis of ingested bacteria. The polypeptide is Invertebrate-type lysozyme 3 (Caenorhabditis elegans).